The sequence spans 215 residues: Probable transaldolase (215 aa).

Lys-83 serves as the catalytic Schiff-base intermediate with substrate.

This sequence belongs to the transaldolase family. Type 3B subfamily.

It is found in the cytoplasm. It carries out the reaction D-sedoheptulose 7-phosphate + D-glyceraldehyde 3-phosphate = D-erythrose 4-phosphate + beta-D-fructose 6-phosphate. It functions in the pathway carbohydrate degradation; pentose phosphate pathway; D-glyceraldehyde 3-phosphate and beta-D-fructose 6-phosphate from D-ribose 5-phosphate and D-xylulose 5-phosphate (non-oxidative stage): step 2/3. Transaldolase is important for the balance of metabolites in the pentose-phosphate pathway. The sequence is that of Probable transaldolase from Bdellovibrio bacteriovorus (strain ATCC 15356 / DSM 50701 / NCIMB 9529 / HD100).